A 152-amino-acid chain; its full sequence is Protein-export protein SecB (152 aa).

Belongs to the SecB family. In terms of assembly, homotetramer, a dimer of dimers. One homotetramer interacts with 1 SecA dimer.

The protein resides in the cytoplasm. Functionally, one of the proteins required for the normal export of preproteins out of the cell cytoplasm. It is a molecular chaperone that binds to a subset of precursor proteins, maintaining them in a translocation-competent state. It also specifically binds to its receptor SecA. The sequence is that of Protein-export protein SecB from Rickettsia felis (strain ATCC VR-1525 / URRWXCal2) (Rickettsia azadi).